The following is a 485-amino-acid chain: Trigger factor (485 aa).

The region spanning 171–256 (GDRVVIDFVG…VKAVKAPGEA (86 aa)) is the PPIase FKBP-type domain. The interval 443 to 485 (FADDEDEAAEAAAPASEAGASKGVISEGVISEGSAPSHETGAA) is disordered. The span at 452 to 462 (EAAAPASEAGA) shows a compositional bias: low complexity.

Belongs to the FKBP-type PPIase family. Tig subfamily.

The protein resides in the cytoplasm. It catalyses the reaction [protein]-peptidylproline (omega=180) = [protein]-peptidylproline (omega=0). Functionally, involved in protein export. Acts as a chaperone by maintaining the newly synthesized protein in an open conformation. Functions as a peptidyl-prolyl cis-trans isomerase. This chain is Trigger factor, found in Methylobacterium sp. (strain 4-46).